Here is a 436-residue protein sequence, read N- to C-terminus: 3-ketoacyl-CoA thiolase (436 aa).

Cysteine 99 acts as the Acyl-thioester intermediate in catalysis. Active-site proton acceptor residues include histidine 392 and cysteine 422.

It belongs to the thiolase-like superfamily. Thiolase family. In terms of assembly, heterotetramer of two alpha chains (FadJ) and two beta chains (FadI).

Its subcellular location is the cytoplasm. The enzyme catalyses an acyl-CoA + acetyl-CoA = a 3-oxoacyl-CoA + CoA. It participates in lipid metabolism; fatty acid beta-oxidation. In terms of biological role, catalyzes the final step of fatty acid oxidation in which acetyl-CoA is released and the CoA ester of a fatty acid two carbons shorter is formed. The chain is 3-ketoacyl-CoA thiolase from Escherichia coli O8 (strain IAI1).